The sequence spans 162 residues: Protein-export protein SecB (162 aa).

This sequence belongs to the SecB family. In terms of assembly, homotetramer, a dimer of dimers. One homotetramer interacts with 1 SecA dimer.

It localises to the cytoplasm. Its function is as follows. One of the proteins required for the normal export of preproteins out of the cell cytoplasm. It is a molecular chaperone that binds to a subset of precursor proteins, maintaining them in a translocation-competent state. It also specifically binds to its receptor SecA. The protein is Protein-export protein SecB of Pseudomonas savastanoi pv. phaseolicola (strain 1448A / Race 6) (Pseudomonas syringae pv. phaseolicola (strain 1448A / Race 6)).